Here is a 452-residue protein sequence, read N- to C-terminus: Disintegrin and metalloproteinase domain-containing protein 11 (452 aa).

Positions 1–120 (RRHHSPLLVS…GGGSCLFNKP (120 aa)) constitute a Peptidase M12B domain. The Extracellular segment spans residues 1-417 (RRHHSPLLVS…EKYKGPSGTN (417 aa)). 3 cysteine pairs are disulfide-bonded: cysteine 31–cysteine 115, cysteine 74–cysteine 99, and cysteine 76–cysteine 83. The region spanning 126 to 214 (PPSCGNGFIE…ACPANLHKQD (89 aa)) is the Disintegrin domain. Asparagine 149 is a glycosylation site (N-linked (GlcNAc...) asparagine). A disulfide bond links cysteine 186 and cysteine 206. N-linked (GlcNAc...) asparagine glycosylation is found at asparagine 288 and asparagine 356. Disulfide bonds link cysteine 360–cysteine 375, cysteine 369–cysteine 381, and cysteine 383–cysteine 392. Residues 360–416 (CPGSWNGVICSDHGVCSNEGKCICHPEWTGKDCSVYDPLPVPKPTGVVEKYKGPSGT) enclose the EGF-like domain. Residues 418–438 (IIIGSIAGAVLIAAIVLGGTG) traverse the membrane as a helical segment. At 439-452 (WGFKNIRRGRSGGG) the chain is on the cytoplasmic side.

Post-translationally, the precursor is cleaved by a furin endopeptidase. As to expression, detected in testis and barely expressed in heart and muscle. Not detectable in liver.

Its subcellular location is the presynaptic cell membrane. The protein resides in the perikaryon. It localises to the cell projection. The protein localises to the axon. Probable ligand for integrin in the brain. This is a non-catalytic metalloprotease-like protein. This Xenopus laevis (African clawed frog) protein is Disintegrin and metalloproteinase domain-containing protein 11 (adam11).